The primary structure comprises 459 residues: ATP-dependent RNA helicase me31b (459 aa).

The segment at 1 to 267 is recA-like domain 1; it reads MMTEKLNSGH…EINLMEELTL (267 aa). Serine 8 and serine 29 each carry phosphoserine. The Q motif signature appears at 58–86; sequence NEFEEFCLKRELLMGIFEKGWERPSPIQE. One can recognise a Helicase ATP-binding domain in the interval 89-259; it reads IPIALSGKDV…EKHLREPYEI (171 aa). 102-109 contributes to the ATP binding site; that stretch reads AKNGTGKT. A DEAD box motif is present at residues 207–210; sequence DEAD. The gyf binding stretch occupies residues 264–431; it reads ELTLKGVTQY…PKVIDPALYV (168 aa). The Helicase C-terminal domain maps to 269 to 429; that stretch reads GVTQYYAFVQ…PIPKVIDPAL (161 aa). Residues 432 to 459 form a recA-like domain 2 region; that stretch reads ANVGASVGDTCNNSDLNNSANEEGNVSK. Serine 450 is subject to Phosphoserine.

Belongs to the DEAD box helicase family. DDX6/DHH1 subfamily. Conserved component of different types of multiprotein ribonucleoprotein complexes (RNPs) that form distinct germ granules (P-body, nuage, sponge body or polar granules) and P-body-like neuronal RNPs. Consequently it interacts with a wide variety of proteins, some of which appear to be common interactive partners in almost all RNPs types i.e. cup and tral, whereas other interactions are specific to a germ granule/RNP. Core functional components in me31B-containing RNPs include RNA regulatory proteins (such as translational repressor, RNA-decapping and exonuclease proteins), RNA localization proteins and additional proteins depending on the biological context of the RNPs. In the P-body RNPs, interacts with at least the translation repressor proteins tral, cup and Edc3, and the mRNA localization factor yps. Interaction with tral or Edc3 is required for translation repression and possibly RNA decapping; binding to tral and Edc3 is mutually exclusive. In the nuage and germ plasm polar granule RNPs, interacts with at least tral, cup, and additional proteins required for assembly and function of the germ granules such as tud, vas and aub. Interacts (when dimethylated on Arg residues) with tud; interaction is RNA-independent. Component of the osk RNP complex, which is composed of at least me31B, exu, yps, aret/bruno, cup, and the mRNA of osk. Component of the nanos RNP complex, which is composed of at least smg, cup, tral, me31B, the CCR4-NOT complex members Rga/NOT2 and Caf1-55, and the mRNA of nanos (nos). Interacts with tral and piRNA pathway components papi and AGO3; promotes interaction between nuage RNPs and the piRNA-mediated transposon silencing. Forms a RNP containing at least me31B, eIF4E1, cup, tral and pAbp; this interaction is required for the translational silencing of maternal mRNAs during the maternal-to-zygotic transition. In the sponge body, forms a RNP containing at least me31B, exu, yps and the mRNA of osk; interactions with exu and yps are RNA dependent. Component of a neuronal RNP, at least composed of me31B, tral and Fmr1. Component of the Atx2-Not1 repressor complex, composed of at least me31B, Atx2, tyf and pAbp. Interacts (via the C-terminus) with Atx2, tyf, pAbp and Lsm12a. Interacts (via RecA-like domain 2) with 4EHP-GYF2 complex member Gyf (via the me31B binding motif). Interacts with 4E-T, Edc3 and Patr-1. In terms of processing, symmetrically dimethylated on arginine residues. As to expression, ubiquitously expressed throughout the brain (at protein level). Expressed in the olfactory system including the antennal lobes, projection neurons, local interneurons, mushroom-body Kenyon cells and glial cells (at protein level).

It is found in the cytoplasm. The protein localises to the cytoplasmic ribonucleoprotein granule. Its subcellular location is the P-body. It localises to the endoplasmic reticulum. The protein resides in the cell projection. It is found in the dendrite. It carries out the reaction ATP + H2O = ADP + phosphate + H(+). In terms of biological role, ATP-dependent RNA helicase which is a core component of a variety of ribonucleoprotein complexes (RNPs) that play critical roles in translational repression and mRNA decapping during embryogenesis, oogenesis, neurogenesis and neurotransmission. Recruits core components and translational repressors to some RNP complexes, and mediates RNP aggregation into processing granules such as P-bodies. As part of a RNP complex containing tral, eIF4E1, cup, and pAbp, involved in RNP-mediated translational repression of maternal mRNAs during oogenesis and embryogenesis. As part of a RNP complex containing tral and the RNA localization factors exu and yps, mediates translational silencing of mRNAs such as osk/oskar and bcd/bicoid during their transport to the oocyte in order to prevent their translation until they reach their positional destinations. In neurons and possibly imaginal disks, involved in miRNA-mediated translational repression, possibly in association with components of the piRNA transposon silencing pathway. Involved in RNA localization and protein trafficking in the oocyte. As part of an ER-associated RNP containing tral, cup and yps, required for tral-dependent ER exit site formation and consequently efficient trafficking of proteins such as grk and yl through the secretory pathway. Component of neuron RNPs that mediate transport and translation of neuronal RNAs, including translation repression of synaptic transcripts in preparation for their dendritic targeting. As part of the Atx2-Not1 repressor complex promotes Not1-dependent post-transcriptional gene silencing in adult circadian pacemaker neurons in order to sustain high-amplitude circadian rhythms and Pdf cycling in a per-independent manner. Promotes the interaction between Atx2 and Not1 within the Atx2-Not1 RNP complex. Recruited to the 4EHP-GYF2 complex by Gyf, where it plays a role in 4EHP-GYF2 mediated translational repression and mRNA decay. The sequence is that of ATP-dependent RNA helicase me31b (me31B) from Drosophila melanogaster (Fruit fly).